The sequence spans 234 residues: Ribosomal RNA small subunit methyltransferase G (234 aa).

Residues Gly74, Phe79, 125 to 126 (AE), and Arg144 each bind S-adenosyl-L-methionine.

Belongs to the methyltransferase superfamily. RNA methyltransferase RsmG family.

The protein localises to the cytoplasm. Specifically methylates the N7 position of a guanine in 16S rRNA. This is Ribosomal RNA small subunit methyltransferase G from Roseiflexus sp. (strain RS-1).